The primary structure comprises 872 residues: Alanine--tRNA ligase (872 aa).

4 residues coordinate Zn(2+): H567, H571, C669, and H673.

Belongs to the class-II aminoacyl-tRNA synthetase family. It depends on Zn(2+) as a cofactor.

Its subcellular location is the cytoplasm. It catalyses the reaction tRNA(Ala) + L-alanine + ATP = L-alanyl-tRNA(Ala) + AMP + diphosphate. Functionally, catalyzes the attachment of alanine to tRNA(Ala) in a two-step reaction: alanine is first activated by ATP to form Ala-AMP and then transferred to the acceptor end of tRNA(Ala). Also edits incorrectly charged Ser-tRNA(Ala) and Gly-tRNA(Ala) via its editing domain. The polypeptide is Alanine--tRNA ligase (Streptococcus pyogenes serotype M3 (strain ATCC BAA-595 / MGAS315)).